The following is a 327-amino-acid chain: Undecaprenyl-phosphate 4-deoxy-4-formamido-L-arabinose transferase (327 aa).

2 helical membrane passes run 235–255 (LLSL…VLLV) and 270–290 (VFTL…GMGL).

Belongs to the glycosyltransferase 2 family.

The protein resides in the cell inner membrane. The catalysed reaction is UDP-4-deoxy-4-formamido-beta-L-arabinose + di-trans,octa-cis-undecaprenyl phosphate = 4-deoxy-4-formamido-alpha-L-arabinopyranosyl di-trans,octa-cis-undecaprenyl phosphate + UDP. Its pathway is glycolipid biosynthesis; 4-amino-4-deoxy-alpha-L-arabinose undecaprenyl phosphate biosynthesis; 4-amino-4-deoxy-alpha-L-arabinose undecaprenyl phosphate from UDP-4-deoxy-4-formamido-beta-L-arabinose and undecaprenyl phosphate: step 1/2. It functions in the pathway bacterial outer membrane biogenesis; lipopolysaccharide biosynthesis. Functionally, catalyzes the transfer of 4-deoxy-4-formamido-L-arabinose from UDP to undecaprenyl phosphate. The modified arabinose is attached to lipid A and is required for resistance to polymyxin and cationic antimicrobial peptides. The sequence is that of Undecaprenyl-phosphate 4-deoxy-4-formamido-L-arabinose transferase from Yersinia pseudotuberculosis serotype IB (strain PB1/+).